The primary structure comprises 344 residues: UPF0283 membrane protein YcjF (344 aa).

3 helical membrane passes run 70–90 (MVMG…VQWT), 100–120 (VALG…GSVV), and 213–233 (ESTL…FIAW).

It belongs to the UPF0283 family.

Its subcellular location is the cell inner membrane. The polypeptide is UPF0283 membrane protein YcjF (Shigella dysenteriae serotype 1 (strain Sd197)).